Consider the following 86-residue polypeptide: Toxin Tpa6 (86 aa).

A signal peptide spans 1 to 20 (MSIFPIALALLLIGLEEGEA). The region spanning 22 to 85 (RDGYPLSKNN…WGDPGTKPCM (64 aa)) is the LCN-type CS-alpha/beta domain. 4 disulfide bridges follow: C33/C84, C37/C58, C43/C64, and C47/C66.

The protein belongs to the long (4 C-C) scorpion toxin superfamily. Sodium channel inhibitor family. Beta subfamily. Expressed by the venom gland.

It localises to the secreted. In terms of biological role, beta toxins bind voltage-independently at site-4 of sodium channels (Nav) and shift the voltage of activation toward more negative potentials thereby affecting sodium channel activation and promoting spontaneous and repetitive firing. In Tityus pachyurus (Colombian scorpion), this protein is Toxin Tpa6.